A 511-amino-acid polypeptide reads, in one-letter code: ATP synthase subunit alpha (511 aa).

170–177 (GDRQTGKT) contributes to the ATP binding site.

Belongs to the ATPase alpha/beta chains family. F-type ATPases have 2 components, CF(1) - the catalytic core - and CF(0) - the membrane proton channel. CF(1) has five subunits: alpha(3), beta(3), gamma(1), delta(1), epsilon(1). CF(0) has three main subunits: a(1), b(2) and c(9-12). The alpha and beta chains form an alternating ring which encloses part of the gamma chain. CF(1) is attached to CF(0) by a central stalk formed by the gamma and epsilon chains, while a peripheral stalk is formed by the delta and b chains.

The protein resides in the cell inner membrane. The catalysed reaction is ATP + H2O + 4 H(+)(in) = ADP + phosphate + 5 H(+)(out). In terms of biological role, produces ATP from ADP in the presence of a proton gradient across the membrane. The alpha chain is a regulatory subunit. The chain is ATP synthase subunit alpha from Granulibacter bethesdensis (strain ATCC BAA-1260 / CGDNIH1).